The primary structure comprises 107 residues: Phosphoribosyl-ATP pyrophosphatase (107 aa).

It belongs to the PRA-PH family.

It is found in the cytoplasm. The catalysed reaction is 1-(5-phospho-beta-D-ribosyl)-ATP + H2O = 1-(5-phospho-beta-D-ribosyl)-5'-AMP + diphosphate + H(+). Its pathway is amino-acid biosynthesis; L-histidine biosynthesis; L-histidine from 5-phospho-alpha-D-ribose 1-diphosphate: step 2/9. The chain is Phosphoribosyl-ATP pyrophosphatase from Azoarcus sp. (strain BH72).